A 396-amino-acid chain; its full sequence is Flavohemoprotein (396 aa).

Positions 1–136 (MLDAQTIATV…LANVFINREA (136 aa)) constitute a Globin domain. Residue His-85 coordinates heme b. Catalysis depends on charge relay system residues Tyr-95 and Glu-135. Residues 147-396 (GGWEGTRDFR…YECFGPHKVL (250 aa)) are reductase. The FAD-binding FR-type domain maps to 150-255 (EGTRDFRIVA…VAPAGDFFMA (106 aa)). Residues Tyr-188 and 204–207 (RQYS) each bind FAD. Residue 268 to 273 (GVGQTP) participates in NADP(+) binding. Position 389–392 (389–392 (CFGP)) interacts with FAD.

This sequence belongs to the globin family. Two-domain flavohemoproteins subfamily. In the C-terminal section; belongs to the flavoprotein pyridine nucleotide cytochrome reductase family. As to quaternary structure, monomer. The cofactor is FAD. Requires heme b as cofactor.

It localises to the cytoplasm. The enzyme catalyses 2 nitric oxide + NADPH + 2 O2 = 2 nitrate + NADP(+) + H(+). It carries out the reaction 2 nitric oxide + NADH + 2 O2 = 2 nitrate + NAD(+) + H(+). Functionally, is involved in NO detoxification in an aerobic process, termed nitric oxide dioxygenase (NOD) reaction that utilizes O(2) and NAD(P)H to convert NO to nitrate, which protects the bacterium from various noxious nitrogen compounds. Therefore, plays a central role in the inducible response to nitrosative stress. Its function is as follows. In the presence of oxygen and NADH, HMP has NADH oxidase activity, which leads to the generation of superoxide and H(2)O(2), both in vitro and in vivo, and it has been suggested that HMP might act as an amplifier of superoxide stress. Under anaerobic conditions, HMP also exhibits nitric oxide reductase and FAD reductase activities. However, all these reactions are much lower than NOD activity. Various electron acceptors are also reduced by HMP in vitro, including dihydropterine, ferrisiderophores, ferric citrate, cytochrome c, nitrite, S-nitrosoglutathione, and alkylhydroperoxides. However, it is unknown if these reactions are of any biological significance in vivo. This Escherichia coli (strain K12) protein is Flavohemoprotein (hmp).